Reading from the N-terminus, the 358-residue chain is Trace amine-associated receptor 7e (358 aa).

Topologically, residues 1–47 are extracellular; it reads MATDDASFPWDQDSILSRDLLSALSSQLCYENLNRSCIRSPYSPGPR. The N-linked (GlcNAc...) asparagine glycan is linked to asparagine 34. Disulfide bonds link cysteine 37–cysteine 201 and cysteine 120–cysteine 205. Residues 48 to 68 form a helical membrane-spanning segment; that stretch reads LILHAVFGFSAVLAVCGNLLV. Topologically, residues 69–83 are cytoplasmic; that stretch reads MTSILHFRQLHSPAN. Residues 84–104 form a helical membrane-spanning segment; sequence FLVASLACADLLVGLTVMPFS. Topologically, residues 105-121 are extracellular; the sequence is MVRSVEGCWYFGDIYCK. Residues 122–143 traverse the membrane as a helical segment; that stretch reads FHSSFDVSFCYSSIFHLCFISV. The Cytoplasmic portion of the chain corresponds to 144-166; it reads DRYIAVSDPLIYLTRFTASVSGK. A helical membrane pass occupies residues 167–187; the sequence is CITFSWFLSIIYSFSLLYTGA. Topologically, residues 188 to 212 are extracellular; sequence SEAGLEDLVSALTCVGGCQLAVNQS. N-linked (GlcNAc...) asparagine glycosylation is present at asparagine 210. A helical transmembrane segment spans residues 213–233; that stretch reads WVFINFLLFLVPTLVMMTVYS. Residues 234–274 are Cytoplasmic-facing; the sequence is KVFLIAKQQAQNIEKIGKQTARASESYKDRVAKRERKAAKT. A helical membrane pass occupies residues 275-295; that stretch reads LGITVAAFLLSWLPYFIDSII. Over 296 to 309 the chain is Extracellular; sequence DAFLGFITPTYVYE. Residues 310–333 form a helical membrane-spanning segment; sequence ILVWIAYYNSAMNPLIYAFFYPWF. The Cytoplasmic portion of the chain corresponds to 334–358; that stretch reads RKAIKLIVTGKILRENSSATNLFPE.

It belongs to the G-protein coupled receptor 1 family.

It is found in the cell membrane. Olfactory receptor specific for N,N-dimethylalkylamines trace amines. Trace amine compounds are enriched in animal body fluids and act on trace amine-associated receptors (TAARs) to elicit both intraspecific and interspecific innate behaviors. Ligand-binding causes a conformation change that triggers signaling via G(s)-class of G alpha proteins (GNAL or GNAS). This is Trace amine-associated receptor 7e from Rattus norvegicus (Rat).